A 501-amino-acid chain; its full sequence is Sucrose transport protein SUT2 (501 aa).

The Cytoplasmic portion of the chain corresponds to 1 to 31 (MPRRPSGGGGGAGPAAAAVRKVPLRKLLRAA). The chain crosses the membrane as a helical span at residues 32–52 (SVACGVQFGWALQLSLLTPYV). Over 53 to 55 (QEL) the chain is Extracellular. A helical transmembrane segment spans residues 56–76 (GIPHAFASLVWLCGPLSGLLV). Residues 77–98 (QPLVGHLSDRIAPAASPLGRRR) are Cytoplasmic-facing. The helical transmembrane segment at 99 to 119 (PFIAAGAASIAAAVLTVGFSA) threads the bilayer. The Extracellular segment spans residues 120–135 (DLGRIFGDSITPGSTR). The chain crosses the membrane as a helical span at residues 136-156 (LGAIIVYLVGFWLLDVGNNAT). The Cytoplasmic portion of the chain corresponds to 157–176 (QGPCRAFLADLTENDPRRTR). A helical membrane pass occupies residues 177-197 (IANAYFSLFMALGNILGYATG). Residues 198 to 222 (AYSGWYKIFPFTVTPSCSISCANLK) are Extracellular-facing. The helical transmembrane segment at 223–243 (SAFLLDIIILVVTTCITVASV) threads the bilayer. At 244–278 (QEPQSLGSDEADHPSTEQEAFLWELFGSFRYFTLP) the chain is on the cytoplasmic side. The helical transmembrane segment at 279-299 (VWMVLIVTALTWIGWFPFILF) threads the bilayer. Over 300-327 (DTDWMGREIYRGSPDDPSITQSYHDGVR) the chain is Extracellular. A helical transmembrane segment spans residues 328–348 (MGSFGLMLNSVLLGFTSIVLE). At 349–356 (KLCRKWGA) the chain is on the cytoplasmic side. Residues 357-377 (GLVWGVSNILMALCFVAMLVI) traverse the membrane as a helical segment. The Extracellular segment spans residues 378–394 (TYVAKNMDYPPSGVPPT). The helical transmembrane segment at 395–415 (GIVIASLVVFTILGAPLAITY) threads the bilayer. Residues 416 to 433 (SIPYAMAASRVENLGLGQ) lie on the Cytoplasmic side of the membrane. The helical transmembrane segment at 434–454 (GLAMGILNLAIVIPQVIVSLG) threads the bilayer. The Extracellular segment spans residues 455–467 (SGPWDQLFGGGNA). A helical transmembrane segment spans residues 468 to 488 (PAFAVAAAASFIGGLVAILGL). At 489 to 501 (PRARIASRRRGHR) the chain is on the cytoplasmic side.

The protein belongs to the glycoside-pentoside-hexuronide (GPH) cation symporter transporter (TC 2.A.2.4) family. As to quaternary structure, homodimer. As to expression, expressed in source leaf blades.

Its subcellular location is the cell membrane. It participates in glycan biosynthesis; sucrose metabolism. Functionally, responsible for the transport of sucrose into the cell, with the concomitant uptake of protons (symport system). May also transport other glucosides. This chain is Sucrose transport protein SUT2 (SUT2), found in Oryza sativa subsp. indica (Rice).